We begin with the raw amino-acid sequence, 481 residues long: Ceramide-binding protein SVF1 (481 aa).

The peripherally associates with membranes stretch occupies residues 1 to 18 (MLKWIKGGISAVTGMAEP). Disordered stretches follow at residues 197–251 (VKKE…DRTI) and 358–389 (DEQLESENGTEQALQGEDEKEDEKEDEEEEEY). Acidic residues-rich tracts occupy residues 203–245 (PESD…VEIT) and 373–388 (GEDEKEDEKEDEEEEE).

The protein belongs to the SVF1 family. Acetylated at the N-terminus in a NatC complex-dependent manner, which is required for membrane targeting.

It is found in the golgi apparatus. Its subcellular location is the cis-Golgi network membrane. The protein localises to the endoplasmic reticulum membrane. The protein resides in the cytoplasm. It localises to the nucleus. Functionally, ceramide-binding protein that may transfer ceramides from the endoplasmic reticulum membrane to the cis-Golgi network membrane, and is thereby required for the biosynthesis of complex sphingolipids. Required for survival in response to oxidative stress. Involved in the diauxic shift. This is Ceramide-binding protein SVF1 (SVF1) from Saccharomyces cerevisiae (strain ATCC 204508 / S288c) (Baker's yeast).